Reading from the N-terminus, the 467-residue chain is Probable glutamate decarboxylase gamma (467 aa).

Position 278 is an N6-(pyridoxal phosphate)lysine (lysine 278).

The protein belongs to the group II decarboxylase family. The cofactor is pyridoxal 5'-phosphate.

It catalyses the reaction L-glutamate + H(+) = 4-aminobutanoate + CO2. This is Probable glutamate decarboxylase gamma from Listeria monocytogenes serovar 1/2a (strain ATCC BAA-679 / EGD-e).